We begin with the raw amino-acid sequence, 270 residues long: LIM zinc-binding domain-containing Nebulette (270 aa).

The LIM zinc-binding domain maps to 3 to 63 (PQCARCGKVV…NAHYPKQSFT (61 aa)). A Nebulin 1 repeat occupies 61-95 (SFTTVADTPENLRLKQQSELQSQVKYKRDFEESKG). At R96 the chain carries Omega-N-methylarginine. The stretch at 97 to 131 (GFSIVTDTPELQRLKRTQEQISNVKYHEDFEKTKG) is one Nebulin 2 repeat. Omega-N-methylarginine is present on R132. The Nebulin 3 repeat unit spans residues 133–159 (GFTPVVDDPVTERVRKSTQVVSDAAYK). At T135 the chain carries Phosphothreonine. Residues 210–270 (AHLRTYRAMY…LPANYIEFVN (61 aa)) enclose the SH3 domain. Residue S230 is modified to Phosphoserine.

The protein resides in the cytoplasm. Functionally, binds to actin and plays an important role in the assembly of the Z-disk. Isoform 2 might play a role in the assembly of focal adhesion. The polypeptide is LIM zinc-binding domain-containing Nebulette (Nebl) (Mus musculus (Mouse)).